Consider the following 141-residue polypeptide: Nucleoside diphosphate kinase (141 aa).

ATP is bound by residues Lys-11, Phe-59, Arg-87, Thr-93, Arg-104, and Asn-114. The active-site Pros-phosphohistidine intermediate is the His-117.

It belongs to the NDK family. Homotetramer. Mg(2+) is required as a cofactor.

It is found in the cytoplasm. It carries out the reaction a 2'-deoxyribonucleoside 5'-diphosphate + ATP = a 2'-deoxyribonucleoside 5'-triphosphate + ADP. The enzyme catalyses a ribonucleoside 5'-diphosphate + ATP = a ribonucleoside 5'-triphosphate + ADP. Its function is as follows. Major role in the synthesis of nucleoside triphosphates other than ATP. The ATP gamma phosphate is transferred to the NDP beta phosphate via a ping-pong mechanism, using a phosphorylated active-site intermediate. The protein is Nucleoside diphosphate kinase of Burkholderia mallei (strain NCTC 10247).